The following is a 271-amino-acid chain: Gap junction beta-5 protein (271 aa).

Residues 1–20 are Cytoplasmic-facing; the sequence is MNWSVFEGLLSGVNKYSTAF. The chain crosses the membrane as a helical span at residues 21–40; that stretch reads GRIWLSLVFVFRVLVYLVTA. Residues 41–75 lie on the Extracellular side of the membrane; sequence ERVWGDDQKDFDCNTRQPGCTNVCYDEFFPVSHVR. A helical transmembrane segment spans residues 76 to 98; sequence LWALQLILVTCPSLLVVMHVAYR. Residues 99-124 lie on the Cytoplasmic side of the membrane; the sequence is KAREKKYQQEVGKGYLYPNPGKKRGG. A helical transmembrane segment spans residues 125–147; that stretch reads LWWTYVCSLLFKATIDIIFLYLF. The Extracellular portion of the chain corresponds to 148-182; it reads HAFYPRYTLPSMVKCHSAPCPNTVDCFIAKPSEKN. A helical transmembrane segment spans residues 183-205; the sequence is IFIVFMLVTAIVCILLNLVELLY. At 206-271 the chain is on the cytoplasmic side; that stretch reads LVIKRCSECA…PRAHVKKTIL (66 aa). The disordered stretch occupies residues 217-237; sequence AKRPPTAHAKNDPNWANPSSK.

This sequence belongs to the connexin family. Beta-type (group I) subfamily. In terms of assembly, a connexon is composed of a hexamer of connexins. In terms of tissue distribution, expressed in skin.

It is found in the cell membrane. It localises to the cell junction. The protein resides in the gap junction. In terms of biological role, one gap junction consists of a cluster of closely packed pairs of transmembrane channels, the connexons, through which materials of low MW diffuse from one cell to a neighboring cell. In Rattus norvegicus (Rat), this protein is Gap junction beta-5 protein (Gjb5).